Reading from the N-terminus, the 313-residue chain is N-acetyl-gamma-glutamyl-phosphate reductase (313 aa).

The active site involves C117.

The protein belongs to the NAGSA dehydrogenase family. Type 2 subfamily.

It is found in the cytoplasm. The enzyme catalyses N-acetyl-L-glutamate 5-semialdehyde + phosphate + NADP(+) = N-acetyl-L-glutamyl 5-phosphate + NADPH + H(+). It functions in the pathway amino-acid biosynthesis; L-arginine biosynthesis; N(2)-acetyl-L-ornithine from L-glutamate: step 3/4. Functionally, catalyzes the NADPH-dependent reduction of N-acetyl-5-glutamyl phosphate to yield N-acetyl-L-glutamate 5-semialdehyde. The polypeptide is N-acetyl-gamma-glutamyl-phosphate reductase (Burkholderia orbicola (strain MC0-3)).